A 309-amino-acid polypeptide reads, in one-letter code: Homoserine kinase (309 aa).

91–101 (PIGSGLGSSAC) contacts ATP.

The protein belongs to the GHMP kinase family. Homoserine kinase subfamily.

The protein localises to the cytoplasm. The catalysed reaction is L-homoserine + ATP = O-phospho-L-homoserine + ADP + H(+). The protein operates within amino-acid biosynthesis; L-threonine biosynthesis; L-threonine from L-aspartate: step 4/5. Functionally, catalyzes the ATP-dependent phosphorylation of L-homoserine to L-homoserine phosphate. This chain is Homoserine kinase, found in Klebsiella pneumoniae (strain 342).